A 143-amino-acid chain; its full sequence is Hemoglobin subunit alpha-2 (143 aa).

An N-acetylserine modification is found at S2. In terms of domain architecture, Globin spans 2 to 143 (SLSTKDKDTV…LARALSEKYR (142 aa)). H60 and H89 together coordinate heme b.

It belongs to the globin family. In terms of assembly, hb 2 is a heterotetramer of two alpha-2 and two beta chains. In terms of tissue distribution, red blood cells.

Its function is as follows. Involved in oxygen transport from gills to the various peripheral tissues. The sequence is that of Hemoglobin subunit alpha-2 from Cottoperca gobio (Frogmouth).